The chain runs to 201 residues: Recombination protein RecR (201 aa).

The C4-type zinc finger occupies 57 to 74 (CRICGFITSKDDDPCVIC). Residues 82–178 (SKIFVVENSQ…KVTRLARGLS (97 aa)) form the Toprim domain.

This sequence belongs to the RecR family.

Its function is as follows. May play a role in DNA repair. It seems to be involved in an RecBC-independent recombinational process of DNA repair. It may act with RecF and RecO. This chain is Recombination protein RecR, found in Oenococcus oeni (strain ATCC BAA-331 / PSU-1).